The following is a 227-amino-acid chain: Cytochrome c oxidase subunit 2 (227 aa).

Residues 1–14 (MAYPFQLGLQDATS) are Mitochondrial intermembrane-facing. A helical transmembrane segment spans residues 15 to 45 (PIMEELTNFHDHTLMIVFLISSLVLYIISLM). The Mitochondrial matrix segment spans residues 46–59 (LTTKLTHTNTMDAQ). Residues 60–87 (EVETIWTILPAVILILIALPSLRILYMM) traverse the membrane as a helical segment. Residues 88 to 227 (DEINNPALTV…HFENWSASMI (140 aa)) are Mitochondrial intermembrane-facing. Residues His-161, Cys-196, Glu-198, Cys-200, His-204, and Met-207 each coordinate Cu cation. Position 198 (Glu-198) interacts with Mg(2+).

It belongs to the cytochrome c oxidase subunit 2 family. As to quaternary structure, component of the cytochrome c oxidase (complex IV, CIV), a multisubunit enzyme composed of 14 subunits. The complex is composed of a catalytic core of 3 subunits MT-CO1, MT-CO2 and MT-CO3, encoded in the mitochondrial DNA, and 11 supernumerary subunits COX4I, COX5A, COX5B, COX6A, COX6B, COX6C, COX7A, COX7B, COX7C, COX8 and NDUFA4, which are encoded in the nuclear genome. The complex exists as a monomer or a dimer and forms supercomplexes (SCs) in the inner mitochondrial membrane with NADH-ubiquinone oxidoreductase (complex I, CI) and ubiquinol-cytochrome c oxidoreductase (cytochrome b-c1 complex, complex III, CIII), resulting in different assemblies (supercomplex SCI(1)III(2)IV(1) and megacomplex MCI(2)III(2)IV(2)). Found in a complex with TMEM177, COA6, COX18, COX20, SCO1 and SCO2. Interacts with TMEM177 in a COX20-dependent manner. Interacts with COX20. Interacts with COX16. Requires Cu cation as cofactor.

It is found in the mitochondrion inner membrane. The enzyme catalyses 4 Fe(II)-[cytochrome c] + O2 + 8 H(+)(in) = 4 Fe(III)-[cytochrome c] + 2 H2O + 4 H(+)(out). Functionally, component of the cytochrome c oxidase, the last enzyme in the mitochondrial electron transport chain which drives oxidative phosphorylation. The respiratory chain contains 3 multisubunit complexes succinate dehydrogenase (complex II, CII), ubiquinol-cytochrome c oxidoreductase (cytochrome b-c1 complex, complex III, CIII) and cytochrome c oxidase (complex IV, CIV), that cooperate to transfer electrons derived from NADH and succinate to molecular oxygen, creating an electrochemical gradient over the inner membrane that drives transmembrane transport and the ATP synthase. Cytochrome c oxidase is the component of the respiratory chain that catalyzes the reduction of oxygen to water. Electrons originating from reduced cytochrome c in the intermembrane space (IMS) are transferred via the dinuclear copper A center (CU(A)) of subunit 2 and heme A of subunit 1 to the active site in subunit 1, a binuclear center (BNC) formed by heme A3 and copper B (CU(B)). The BNC reduces molecular oxygen to 2 water molecules using 4 electrons from cytochrome c in the IMS and 4 protons from the mitochondrial matrix. The protein is Cytochrome c oxidase subunit 2 (MT-CO2) of Sundamys muelleri (Mueller's giant sunda rat).